The following is a 426-amino-acid chain: Antigen EM13 (426 aa).

An F-BAR domain is found at 1–240; it reads MIQERADIEK…TVAKVDADAD (240 aa). Disordered stretches follow at residues 287–315 and 350–369; these read LTSLKTITSPDRGGPIPGTTDSGSNISTS and ISKEKQRVEDTPPYPDFVDD. Over residues 305–315 the composition is skewed to polar residues; that stretch reads TTDSGSNISTS. The region spanning 371 to 426 is the SH3 domain; it reads RPGVPIRALYDYVGVEADELSFNSGDLFEKLEDEDEQGWCKGRKDGRVGLYPRQLR.

The polypeptide is Antigen EM13 (EM13) (Echinococcus multilocularis (Fox tapeworm)).